The sequence spans 404 residues: Protein translocase subunit SecD (404 aa).

6 helical membrane-spanning segments follow: residues H7–V27, L239–V259, I262–L282, T283–I303, F330–L350, and G357–S377.

The protein belongs to the SecD/SecF family. SecD subfamily. Forms a complex with SecF. Part of the essential Sec protein translocation apparatus which comprises SecA, SecYEG and auxiliary proteins SecDF. Other proteins may also be involved.

The protein localises to the cell inner membrane. Part of the Sec protein translocase complex. Interacts with the SecYEG preprotein conducting channel. SecDF uses the proton motive force (PMF) to complete protein translocation after the ATP-dependent function of SecA. The sequence is that of Protein translocase subunit SecD from Leptotrichia buccalis (strain ATCC 14201 / DSM 1135 / JCM 12969 / NCTC 10249 / C-1013-b).